The primary structure comprises 405 residues: 5-azacytidine-induced protein 2 (405 aa).

The tract at residues 1–198 (MDTLVEDDIC…TELQKARQTG (198 aa)) is homodimerization. Positions 40-197 (ALVTAYEDIK…RTELQKARQT (158 aa)) form a coiled coil. The tract at residues 229–270 (SDNMQHAYWELKREMSNLHLVTQVQAELLRKLKTSAAVKKAC) is interaction with TBK1 and IKBKE. Phosphoserine occurs at positions 331 and 366. The disordered stretch occupies residues 357–377 (LEDNSWVFPSPPKSSETAFGE).

As to quaternary structure, homodimer. Interacts with IKBKE and TBK1. Interacts with TICAM1. Interacts with TAX1BP1. Interacts with CALCOCO2. Post-translationally, ubiquitinated via 'Lys-48'-linked polyubiquitination by TRIM38, leading to its degradation. In terms of tissue distribution, testis, ovary, heart, lung, kidney and brain. Expressed mainly in the spermatocytes or spermatids in the testis.

It is found in the cytoplasm. In terms of biological role, adapter protein which binds TBK1 and IKBKE playing a role in antiviral innate immunity. Activates serine/threonine-protein kinase TBK1 and facilitates its oligomerization. Enhances the phosphorylation of NF-kappa-B p65 subunit RELA by TBK1. Promotes TBK1-induced as well as TNF-alpha or PMA-induced activation of NF-kappa-B. Participates in IFNB promoter activation via TICAM1. In Mus musculus (Mouse), this protein is 5-azacytidine-induced protein 2 (Azi2).